The following is a 146-amino-acid chain: D-aminoacyl-tRNA deacylase (146 aa).

Positions Gly138–Pro139 match the Gly-cisPro motif, important for rejection of L-amino acids motif.

This sequence belongs to the DTD family. As to quaternary structure, homodimer.

The protein localises to the cytoplasm. The enzyme catalyses glycyl-tRNA(Ala) + H2O = tRNA(Ala) + glycine + H(+). It carries out the reaction a D-aminoacyl-tRNA + H2O = a tRNA + a D-alpha-amino acid + H(+). An aminoacyl-tRNA editing enzyme that deacylates mischarged D-aminoacyl-tRNAs. Also deacylates mischarged glycyl-tRNA(Ala), protecting cells against glycine mischarging by AlaRS. Acts via tRNA-based rather than protein-based catalysis; rejects L-amino acids rather than detecting D-amino acids in the active site. By recycling D-aminoacyl-tRNA to D-amino acids and free tRNA molecules, this enzyme counteracts the toxicity associated with the formation of D-aminoacyl-tRNA entities in vivo and helps enforce protein L-homochirality. This is D-aminoacyl-tRNA deacylase from Stenotrophomonas maltophilia (strain K279a).